Here is a 193-residue protein sequence, read N- to C-terminus: Acyl carrier protein phosphodiesterase (193 aa).

It belongs to the AcpH family.

The enzyme catalyses holo-[ACP] + H2O = apo-[ACP] + (R)-4'-phosphopantetheine + H(+). Functionally, converts holo-ACP to apo-ACP by hydrolytic cleavage of the phosphopantetheine prosthetic group from ACP. The sequence is that of Acyl carrier protein phosphodiesterase from Pectobacterium atrosepticum (strain SCRI 1043 / ATCC BAA-672) (Erwinia carotovora subsp. atroseptica).